The primary structure comprises 288 residues: Cyclin-dependent kinase 2 homolog (288 aa).

Positions 4–284 (YHGLEKIGEG…AKQALEHAYF (281 aa)) constitute a Protein kinase domain. ATP contacts are provided by residues 10–18 (IGEGTYGVV) and K32. The residue at position 14 (T14) is a Phosphothreonine. At Y15 the chain carries Phosphotyrosine. The Proton acceptor role is filled by D125. T158 carries the post-translational modification Phosphothreonine.

Belongs to the protein kinase superfamily. CMGC Ser/Thr protein kinase family. CDC2/CDKX subfamily. In terms of assembly, may form a complex composed of at least the catalytic subunit CRK2 and a cyclin. Requires Mg(2+) as cofactor.

The protein localises to the cytoplasm. It catalyses the reaction L-seryl-[protein] + ATP = O-phospho-L-seryl-[protein] + ADP + H(+). It carries out the reaction L-threonyl-[protein] + ATP = O-phospho-L-threonyl-[protein] + ADP + H(+). The enzyme catalyses [DNA-directed RNA polymerase] + ATP = phospho-[DNA-directed RNA polymerase] + ADP + H(+). Phosphorylation at Thr-14 or Tyr-15 inactivates the enzyme, while phosphorylation at Thr-158 activates it. Serine/threonine-protein kinase. Involved in the control of the cell cycle. Required for entry into S-phase and mitosis. Probable component of the kinase complex that phosphorylates the repetitive C-terminus of RNA polymerase II. The polypeptide is Cyclin-dependent kinase 2 homolog (Plasmodium vivax).